A 155-amino-acid chain; its full sequence is Putative pre-16S rRNA nuclease (155 aa).

This sequence belongs to the YqgF nuclease family.

It is found in the cytoplasm. Its function is as follows. Could be a nuclease involved in processing of the 5'-end of pre-16S rRNA. This Xanthomonas euvesicatoria pv. vesicatoria (strain 85-10) (Xanthomonas campestris pv. vesicatoria) protein is Putative pre-16S rRNA nuclease.